Reading from the N-terminus, the 323-residue chain is Fructose-1,6-bisphosphatase class 1 (323 aa).

Mg(2+)-binding residues include Glu-88, Asp-107, Leu-109, and Asp-110. Substrate contacts are provided by residues 110-113 and Asn-200; that span reads DGSS. Glu-272 is a binding site for Mg(2+).

This sequence belongs to the FBPase class 1 family. As to quaternary structure, homotetramer. Mg(2+) is required as a cofactor.

The protein localises to the cytoplasm. The enzyme catalyses beta-D-fructose 1,6-bisphosphate + H2O = beta-D-fructose 6-phosphate + phosphate. Its pathway is carbohydrate biosynthesis; gluconeogenesis. The chain is Fructose-1,6-bisphosphatase class 1 from Acinetobacter baumannii (strain ATCC 17978 / DSM 105126 / CIP 53.77 / LMG 1025 / NCDC KC755 / 5377).